Reading from the N-terminus, the 270-residue chain is Protein-ADP-ribose hydrolase (270 aa).

The Macro domain occupies 73–267; it reads VSVKDCQKTN…LYDTYLQKEN (195 aa). ADP-D-ribose contacts are provided by aspartate 92, isoleucine 93, and asparagine 106. Zn(2+) is bound by residues cysteine 112, histidine 117, and cysteine 119. ADP-D-ribose is bound by residues cysteine 119, isoleucine 120, aspartate 121, serine 212, threonine 213, glycine 214, glutamate 215, and phenylalanine 216.

It belongs to the MacroD-type family. Zn-Macro subfamily. Zn(2+) serves as cofactor.

The catalysed reaction is 4-O-(ADP-D-ribosyl)-L-aspartyl-[protein] + H2O = L-aspartyl-[protein] + ADP-D-ribose + H(+). ADP-ribosylhydrolase that specifically reverses the SirTM-mediated mono-ADP-ribosylation at an asparatate residue of GcvH-L, by releasing ADP-ribose from the target protein. May play a role in the regulation of the response to host-induced oxidative stress. This is Protein-ADP-ribose hydrolase from Streptococcus pyogenes serotype M1.